The sequence spans 434 residues: DNA primase large subunit PriL (434 aa).

The [4Fe-4S] cluster site is built by Cys281, Cys392, Cys403, and Cys409.

It belongs to the eukaryotic-type primase large subunit family. As to quaternary structure, heterodimer of a small subunit (PriS) and a large subunit (PriL). The cofactor is [4Fe-4S] cluster.

Regulatory subunit of DNA primase, an RNA polymerase that catalyzes the synthesis of short RNA molecules used as primers for DNA polymerase during DNA replication. Stabilizes and modulates the activity of the small subunit, increasing the rate of DNA synthesis, and conferring RNA synthesis capability. The DNA polymerase activity may enable DNA primase to also catalyze primer extension after primer synthesis. May also play a role in DNA repair. The protein is DNA primase large subunit PriL of Methanothermobacter thermautotrophicus (strain ATCC 29096 / DSM 1053 / JCM 10044 / NBRC 100330 / Delta H) (Methanobacterium thermoautotrophicum).